The chain runs to 466 residues: Soluble pyridine nucleotide transhydrogenase (466 aa).

36–45 (ERYQNVGGGC) is an FAD binding site.

This sequence belongs to the class-I pyridine nucleotide-disulfide oxidoreductase family. It depends on FAD as a cofactor.

The protein resides in the cytoplasm. The catalysed reaction is NAD(+) + NADPH = NADH + NADP(+). Its function is as follows. Conversion of NADPH, generated by peripheral catabolic pathways, to NADH, which can enter the respiratory chain for energy generation. In Escherichia coli O81 (strain ED1a), this protein is Soluble pyridine nucleotide transhydrogenase.